Here is a 255-residue protein sequence, read N- to C-terminus: Ciliogenesis and planar polarity effector 2 (255 aa).

The interval Pro52–Asp255 is small GTPase-like. GTP is bound by residues Gly64–Thr71 and Thr177–Asp180.

It belongs to the small GTPase superfamily. Rab family.

It localises to the cytoplasm. Its subcellular location is the cytoskeleton. It is found in the cilium basal body. Potential effector of the planar cell polarity signaling pathway. Plays a role in targeted membrane trafficking most probably at the level of vesicle fusion with membranes. Involved in cilium biogenesis by regulating the transport of cargo proteins to the basal body and to the apical tips of cilia. More generally involved in exocytosis in secretory cells. The protein is Ciliogenesis and planar polarity effector 2 (cplane2) of Xenopus tropicalis (Western clawed frog).